The primary structure comprises 157 residues: Transcription elongation factor GreA (157 aa).

Positions 25–43 are enriched in basic and acidic residues; that stretch reads EGRAKVAEQLSEARDKGDL. The tract at residues 25–47 is disordered; sequence EGRAKVAEQLSEARDKGDLSENA. The stretch at 43 to 79 forms a coiled coil; that stretch reads LSENAEYDAAKEAQEILERRIAKLEELMINARVINKD.

This sequence belongs to the GreA/GreB family.

Necessary for efficient RNA polymerase transcription elongation past template-encoded arresting sites. The arresting sites in DNA have the property of trapping a certain fraction of elongating RNA polymerases that pass through, resulting in locked ternary complexes. Cleavage of the nascent transcript by cleavage factors such as GreA or GreB allows the resumption of elongation from the new 3'terminus. GreA releases sequences of 2 to 3 nucleotides. The protein is Transcription elongation factor GreA of Amoebophilus asiaticus (strain 5a2).